Reading from the N-terminus, the 61-residue chain is Large ribosomal subunit protein bL32 (61 aa).

Basic residues predominate over residues 1-16 (MAVPRRKTSPSRRGMR). Residues 1–61 (MAVPRRKTSP…RQVLKVKKED (61 aa)) form a disordered region. Basic and acidic residues predominate over residues 17–44 (RSADALKKPTYVEDKDSGELRRPHHLDL).

Belongs to the bacterial ribosomal protein bL32 family.

The chain is Large ribosomal subunit protein bL32 from Afipia carboxidovorans (strain ATCC 49405 / DSM 1227 / KCTC 32145 / OM5) (Oligotropha carboxidovorans).